A 743-amino-acid chain; its full sequence is Threonine synthase-like 1 (743 aa).

N6-acetyllysine is present on Lys-281. Lys-351 is modified (N6-(pyridoxal phosphate)lysine).

Belongs to the threonine synthase family. Pyridoxal 5'-phosphate serves as cofactor.

The chain is Threonine synthase-like 1 (THNSL1) from Homo sapiens (Human).